The sequence spans 208 residues: Uracil phosphoribosyltransferase (208 aa).

5-phospho-alpha-D-ribose 1-diphosphate contacts are provided by residues arginine 78, arginine 103, and 130-138 (DPMLATGGS). Uracil contacts are provided by residues isoleucine 193 and 198–200 (GDA). Aspartate 199 is a binding site for 5-phospho-alpha-D-ribose 1-diphosphate.

This sequence belongs to the UPRTase family. Requires Mg(2+) as cofactor.

The catalysed reaction is UMP + diphosphate = 5-phospho-alpha-D-ribose 1-diphosphate + uracil. The protein operates within pyrimidine metabolism; UMP biosynthesis via salvage pathway; UMP from uracil: step 1/1. Its activity is regulated as follows. Allosterically activated by GTP. Its function is as follows. Catalyzes the conversion of uracil and 5-phospho-alpha-D-ribose 1-diphosphate (PRPP) to UMP and diphosphate. This Photobacterium profundum (strain SS9) protein is Uracil phosphoribosyltransferase.